A 716-amino-acid chain; its full sequence is Mitochondrial Rho GTPase 1 (716 aa).

Residues 1–692 (MSPDAIRVVV…VSVDQDDIKH (692 aa)) are Cytoplasmic-facing. A Miro 1 domain is found at 3–224 (PDAIRVVVCG…FYLCQRAVTH (222 aa)). The tract at residues 58–99 (NDQDHHHHHQSSPSTMKNKRKHNNKRERERERESSINNVQPN) is disordered. GTP-binding positions include 84 to 91 (ERERERES), 113 to 115 (DTS), and 167 to 170 (NKSD). The EF-hand 1 domain maps to 240 to 275 (GAIKPLKRIFWLSDTDQDGYLNFEELSELHKKCFGI). Positions 253, 255, 257, 259, and 264 each coordinate Ca(2+). The disordered stretch occupies residues 303 to 327 (TQTPPQQQHLATSAGTPNGTTTTTS). The region spanning 388–423 (TGYKFFVDLFIKFDKDNDGGLNEDELNTLFRSTPGI) is the EF-hand 2 domain. Ca(2+) contacts are provided by Asp-401, Asp-403, Asp-405, and Glu-412. Residues 505-671 (RNVFNCFIVG…FIQLVDAAKT (167 aa)) enclose the Miro 2 domain. Residues 514 to 521 (GAPKAGKS), 550 to 554 (ELRGG), and 620 to 623 (LKAD) each bind GTP. The chain crosses the membrane as a helical; Anchor for type IV membrane protein span at residues 693–713 (IIMTGAAIAVVGLVSIWVLNS). At 714 to 716 (LRR) the chain is on the mitochondrial intermembrane side.

It belongs to the mitochondrial Rho GTPase family.

The protein resides in the mitochondrion outer membrane. Functionally, mitochondrial GTPase involved in mitochondrial trafficking. Probably involved in control of anterograde transport of mitochondria and their subcellular distribution. The chain is Mitochondrial Rho GTPase 1 (GEM1) from Candida albicans (strain SC5314 / ATCC MYA-2876) (Yeast).